Reading from the N-terminus, the 268-residue chain is Zinc finger protein SNAI2 (268 aa).

Residues 1–20 (MPRSFLVKKHFNASKKPNYS) form an SNAG domain region. Residues 84-116 (GRVSPLPSSDTSSKDHSGSESPISDEEERLQPK) form a disordered region. 4 consecutive C2H2-type zinc fingers follow at residues 128–150 (FQCNLCNKTYSTFSGLAKHKQLH), 159–181 (FSCKYCDKEYVSLGALKMHIRTH), 185–207 (CVCKICGKAFSRPWLLQGHIRTH), and 213–235 (FSCPHCNRAFADRSNLRAHLQTH). The C2H2-type 5; atypical zinc-finger motif lies at 241 to 264 (YQCKNCSKTFSRMSLLHKHEESGC).

The protein belongs to the snail C2H2-type zinc-finger protein family. In terms of assembly, interacts (via SNAG domain) with LIMD1 (via LIM domains), WTIP (via LIM domains) and AJUBA (via LIM domains). Interacts (via zinc fingers) with KPNA2, KPNB1 and TNPO1. May interact (via zinc fingers) with IPO7. Phosphorylated by GSK3B. Once phosphorylated, it becomes a target for ubiquitination. Post-translationally, ubiquitinated by the SCF(FBXO11) complex; ubiquitination requires previous GSK3B-mediated SNAI2 phosphorylation.

It localises to the nucleus. It is found in the cytoplasm. In terms of biological role, transcriptional repressor that modulates both activator-dependent and basal transcription. Involved in the generation and migration of neural crest cells. Plays a role in mediating RAF1-induced transcriptional repression of the TJ protein, occludin (OCLN) and subsequent oncogenic transformation of epithelial cells. Represses BRCA2 expression by binding to its E2-box-containing silencer and recruiting CTBP1 and HDAC1 in breast cells. In epidermal keratinocytes, binds to the E-box in ITGA3 promoter and represses its transcription. Involved in the regulation of ITGB1 and ITGB4 expression and cell adhesion and proliferation in epidermal keratinocytes. Binds to E-box2 domain of BSG and activates its expression during TGFB1-induced epithelial-mesenchymal transition (EMT) in hepatocytes. Represses E-Cadherin/CDH1 transcription via E-box elements. Involved in osteoblast maturation. Binds to RUNX2 and SOC9 promoters and may act as a positive and negative transcription regulator, respectively, in osteoblasts. Binds to CXCL12 promoter via E-box regions in mesenchymal stem cells and osteoblasts. Plays an essential role in TWIST1-induced EMT and its ability to promote invasion and metastasis. The protein is Zinc finger protein SNAI2 (Snai2) of Rattus norvegicus (Rat).